Here is a 466-residue protein sequence, read N- to C-terminus: tRNA(Ile)-lysidine synthase (466 aa).

An ATP-binding site is contributed by 26 to 31 (SGGSDS).

This sequence belongs to the tRNA(Ile)-lysidine synthase family.

Its subcellular location is the cytoplasm. It catalyses the reaction cytidine(34) in tRNA(Ile2) + L-lysine + ATP = lysidine(34) in tRNA(Ile2) + AMP + diphosphate + H(+). In terms of biological role, ligates lysine onto the cytidine present at position 34 of the AUA codon-specific tRNA(Ile) that contains the anticodon CAU, in an ATP-dependent manner. Cytidine is converted to lysidine, thus changing the amino acid specificity of the tRNA from methionine to isoleucine. This chain is tRNA(Ile)-lysidine synthase, found in Oceanobacillus iheyensis (strain DSM 14371 / CIP 107618 / JCM 11309 / KCTC 3954 / HTE831).